The chain runs to 99 residues: Co-chaperonin GroES (99 aa).

This sequence belongs to the GroES chaperonin family. In terms of assembly, heptamer of 7 subunits arranged in a ring. Interacts with the chaperonin GroEL.

The protein localises to the cytoplasm. Functionally, together with the chaperonin GroEL, plays an essential role in assisting protein folding. The GroEL-GroES system forms a nano-cage that allows encapsulation of the non-native substrate proteins and provides a physical environment optimized to promote and accelerate protein folding. GroES binds to the apical surface of the GroEL ring, thereby capping the opening of the GroEL channel. The sequence is that of Co-chaperonin GroES from Methylacidiphilum infernorum (isolate V4) (Methylokorus infernorum (strain V4)).